A 738-amino-acid chain; its full sequence is Polyribonucleotide nucleotidyltransferase (738 aa).

Residues aspartate 487 and aspartate 493 each contribute to the Mg(2+) site. Positions 554–613 (PKIVTMTINPDKIRDVIGPGGKMINSIIDQTGVKIDIEQDGTVFIASTDQEGIDLAMSMI) constitute a KH domain. In terms of domain architecture, S1 motif spans 623–691 (GEVYDATVRR…DKGRVNASRK (69 aa)). The tract at residues 704–738 (EAYEAKRKAARESRPPRDSRPPRRDGDRRPPRSTN) is disordered.

It belongs to the polyribonucleotide nucleotidyltransferase family. Mg(2+) is required as a cofactor.

It is found in the cytoplasm. The catalysed reaction is RNA(n+1) + phosphate = RNA(n) + a ribonucleoside 5'-diphosphate. Functionally, involved in mRNA degradation. Catalyzes the phosphorolysis of single-stranded polyribonucleotides processively in the 3'- to 5'-direction. The protein is Polyribonucleotide nucleotidyltransferase of Exiguobacterium sp. (strain ATCC BAA-1283 / AT1b).